Reading from the N-terminus, the 525-residue chain is Glutamate synthase large subunit-like protein YerD (525 aa).

The chain crosses the membrane as a helical span at residues 4 to 24 (IIIALIAFIIGIIAIPIVLFA).

It belongs to the glutamate synthase family.

It is found in the cell membrane. The sequence is that of Glutamate synthase large subunit-like protein YerD (yerD) from Bacillus subtilis (strain 168).